The following is a 1357-amino-acid chain: Regulator of V-ATPase in vacuolar membrane protein 1 (1357 aa).

WD repeat units follow at residues 98–134, 142–182, 190–239, 384–423, 431–470, 595–636, 638–679, and 898–939; these read HDDT…GVYQ, KQPK…GEQA, PHPK…KNHT, GHNK…HGVS, QTES…KEDS, INTG…LEYE, TFHN…YTNN, and QKSI…RIAY. The disordered stretch occupies residues 1243–1357; sequence GSPSASDIES…ITKNLLDDFV (115 aa). 2 positions are modified to phosphoserine: S1244 and S1248. Over residues 1272 to 1288 the composition is skewed to low complexity; that stretch reads STSSNSLAQSSSSAPRS. A compositionally biased stretch (basic and acidic residues) spans 1320 to 1332; that stretch reads SENRKDKLSKDIL.

Component of the RAVE complex composed of RAV1, RAV2 and CBF3D/SKP1. Within the complex, it interacts directly with RAV2 and CBF3D. Interacts with the V-ATPase V1 subunits VMA1, VMA2 and VMA8.

It is found in the endomembrane system. Functionally, component of the RAVE complex, which is required for stable assembly of the vacuolar ATPase complex V-ATPase under many conditions. Required for transport between the early endosome and the late endosome/prevacuolar compartment (PVC), suggesting that assembly of vacuolar ATPase at the early endosome is required for transport from the early endosome to the PVC. The sequence is that of Regulator of V-ATPase in vacuolar membrane protein 1 (RAV1) from Saccharomyces cerevisiae (strain ATCC 204508 / S288c) (Baker's yeast).